The primary structure comprises 441 residues: tRNA modification GTPase MnmE (441 aa).

Residues arginine 23, glutamate 81, and arginine 121 each contribute to the (6S)-5-formyl-5,6,7,8-tetrahydrofolate site. One can recognise a TrmE-type G domain in the interval 219 to 366 (GFTVVLAGAP…LLDAIQAAAE (148 aa)). GTP contacts are provided by residues 229–234 (NSGKST), 248–254 (SDSPGTT), and 273–276 (DTAG). Mg(2+) is bound by residues serine 233 and threonine 254. Lysine 441 serves as a coordination point for (6S)-5-formyl-5,6,7,8-tetrahydrofolate.

It belongs to the TRAFAC class TrmE-Era-EngA-EngB-Septin-like GTPase superfamily. TrmE GTPase family. Homodimer. Heterotetramer of two MnmE and two MnmG subunits. The cofactor is K(+).

Its subcellular location is the cytoplasm. Functionally, exhibits a very high intrinsic GTPase hydrolysis rate. Involved in the addition of a carboxymethylaminomethyl (cmnm) group at the wobble position (U34) of certain tRNAs, forming tRNA-cmnm(5)s(2)U34. This Methylobacterium radiotolerans (strain ATCC 27329 / DSM 1819 / JCM 2831 / NBRC 15690 / NCIMB 10815 / 0-1) protein is tRNA modification GTPase MnmE.